The sequence spans 1267 residues: Probable cation-transporting ATPase catp-6 (1267 aa).

Over 1–32 the chain is Extracellular; that stretch reads MVEAGGARRHRMTLESGDHTLTLFAYRTGPFR. The helical transmembrane segment at 33-53 threads the bilayer; that stretch reads TILFYALTVLTLGIFRLILHW. Residues 54–189 are Cytoplasmic-facing; sequence KQKWDVKMRM…RNEIVVQLRP (136 aa). The chain crosses the membrane as a helical span at residues 190–210; sequence ILYLLVMEVITPFYVFQIFSV. Residues 211–217 are Extracellular-facing; the sequence is TVWYNDE. Residues 218–238 form a helical membrane-spanning segment; sequence YAYYASLIVILSLGSIVMDVY. At 239–390 the chain is on the cytoplasmic side; that stretch reads QIRTQEIRLR…DFRFTKDLFK (152 aa). Residues 391-411 form a helical membrane-spanning segment; it reads FILFLACISGCGFIYTIIVMI. The Extracellular segment spans residues 412 to 424; sequence MRGNTLRRIIVRS. The helical transmembrane segment at 425-445 threads the bilayer; sequence LDIITITVPPALPAAMSVGII. The Cytoplasmic portion of the chain corresponds to 446–950; sequence NAQLRLKKKE…VTSFGIFKYM (505 aa). The active-site 4-aspartylphosphate intermediate is the D476. Residues D891 and D895 each contribute to the Mg(2+) site. A helical membrane pass occupies residues 951–971; that stretch reads AGYSLTQFVTVMHLYWISNIL. The Extracellular segment spans residues 972–976; that stretch reads TDGQF. Residues 977 to 997 form a helical membrane-spanning segment; sequence MYIDMFLITMFALLFGNTPAF. Residues 998-1013 lie on the Cytoplasmic side of the membrane; the sequence is YRLAHTPPPTRLLSIA. Residues 1014-1034 form a helical membrane-spanning segment; sequence SMTSVVGQLIIIGVVQFIVFF. Topologically, residues 1035 to 1058 are extracellular; sequence STSQQPWFTPYQPPVDDEVEDKRS. Residues 1059 to 1079 form a helical membrane-spanning segment; the sequence is MQGTALFCVSMFQYIILALVY. Topologically, residues 1080–1097 are cytoplasmic; the sequence is SKGPPFRGNLWSNKPMCA. The chain crosses the membrane as a helical span at residues 1098–1118; sequence LTIFATLLCLFIVIWPTELVL. At 1119 to 1132 the chain is on the extracellular side; that stretch reads KTLGNVELPSLTFR. Residues 1133–1153 form a helical membrane-spanning segment; the sequence is IFIVIVGAVNAAVSYGFETLF. Topologically, residues 1154–1267 are cytoplasmic; it reads VDFFLLGYWE…EEPEKLERTY (114 aa). Residues 1232 to 1256 are disordered; that stretch reads ERLISRIGGEPTWLTNPIPPHSLSE.

Belongs to the cation transport ATPase (P-type) (TC 3.A.3) family. Type V subfamily.

Its subcellular location is the membrane. It carries out the reaction ATP + H2O = ADP + phosphate + H(+). The polypeptide is Probable cation-transporting ATPase catp-6 (Caenorhabditis elegans).